The sequence spans 330 residues: Tryptophan--tRNA ligase (330 aa).

ATP contacts are provided by residues 10-12 and 18-19; these read QPS and GN. The 'HIGH' region motif lies at 11-19; the sequence is PSGTLTLGN. Asp-133 contacts L-tryptophan. ATP is bound by residues 145–147, Ile-184, and 193–197; these read GED and KMSKS. The 'KMSKS' region signature appears at 193-197; that stretch reads KMSKS.

The protein belongs to the class-I aminoacyl-tRNA synthetase family. Homodimer.

It localises to the cytoplasm. It catalyses the reaction tRNA(Trp) + L-tryptophan + ATP = L-tryptophyl-tRNA(Trp) + AMP + diphosphate + H(+). Catalyzes the attachment of tryptophan to tRNA(Trp). This is Tryptophan--tRNA ligase from Halalkalibacterium halodurans (strain ATCC BAA-125 / DSM 18197 / FERM 7344 / JCM 9153 / C-125) (Bacillus halodurans).